The primary structure comprises 506 residues: Histidine ammonia-lyase (506 aa).

The segment at residues 142–144 (ASG) is a cross-link (5-imidazolinone (Ala-Gly)). 2,3-didehydroalanine (Ser) is present on S143.

It belongs to the PAL/histidase family. Contains an active site 4-methylidene-imidazol-5-one (MIO), which is formed autocatalytically by cyclization and dehydration of residues Ala-Ser-Gly.

The protein localises to the cytoplasm. The enzyme catalyses L-histidine = trans-urocanate + NH4(+). It functions in the pathway amino-acid degradation; L-histidine degradation into L-glutamate; N-formimidoyl-L-glutamate from L-histidine: step 1/3. The polypeptide is Histidine ammonia-lyase (Bacillus cereus (strain ATCC 14579 / DSM 31 / CCUG 7414 / JCM 2152 / NBRC 15305 / NCIMB 9373 / NCTC 2599 / NRRL B-3711)).